The primary structure comprises 123 residues: Small ribosomal subunit protein uS13 (123 aa).

The segment at 97–123 (PVRGQRTRSNARTRKGPRPSRIKKKGK) is disordered. Basic residues predominate over residues 101–123 (QRTRSNARTRKGPRPSRIKKKGK).

It belongs to the universal ribosomal protein uS13 family. In terms of assembly, part of the 30S ribosomal subunit. Forms a loose heterodimer with protein S19. Forms two bridges to the 50S subunit in the 70S ribosome.

Functionally, located at the top of the head of the 30S subunit, it contacts several helices of the 16S rRNA. In the 70S ribosome it contacts the 23S rRNA (bridge B1a) and protein L5 of the 50S subunit (bridge B1b), connecting the 2 subunits; these bridges are implicated in subunit movement. Contacts the tRNAs in the A and P-sites. This Fervidobacterium nodosum (strain ATCC 35602 / DSM 5306 / Rt17-B1) protein is Small ribosomal subunit protein uS13.